The sequence spans 468 residues: Flavin-containing monooxygenase FMO GS-OX-like 1 (468 aa).

16-21 serves as a coordination point for FAD; that stretch reads GLGAAG. 211–216 is an NADP(+) binding site; sequence GSQASG.

This sequence belongs to the FMO family. The cofactor is FAD.

Functionally, catalyzes the conversion of methylthioalkyl glucosinolates of any chain length into methylsulfinylalkyl glucosinolates. This chain is Flavin-containing monooxygenase FMO GS-OX-like 1, found in Arabidopsis thaliana (Mouse-ear cress).